The sequence spans 218 residues: NADH dehydrogenase [ubiquinone] iron-sulfur protein 7, mitochondrial (218 aa).

The span at 34 to 48 (LPALSPSTSPTSYTR) shows a compositional bias: low complexity. The segment at 34–61 (LPALSPSTSPTSYTRPGPPSTSPPPPGL) is disordered. The segment covering 49 to 60 (PGPPSTSPPPPG) has biased composition (pro residues). Cysteine 93, cysteine 94, cysteine 158, and cysteine 188 together coordinate [4Fe-4S] cluster.

It belongs to the complex I 20 kDa subunit family. Complex I is composed of at least 49 different subunits. This is a component of the iron-sulfur (IP) fragment of the enzyme. Requires [4Fe-4S] cluster as cofactor.

The protein localises to the mitochondrion. It carries out the reaction a ubiquinone + NADH + 5 H(+)(in) = a ubiquinol + NAD(+) + 4 H(+)(out). In terms of biological role, core subunit of the mitochondrial membrane respiratory chain NADH dehydrogenase (Complex I) that is believed to belong to the minimal assembly required for catalysis. Complex I functions in the transfer of electrons from NADH to the respiratory chain. The immediate electron acceptor for the enzyme is believed to be ubiquinone. The chain is NADH dehydrogenase [ubiquinone] iron-sulfur protein 7, mitochondrial from Arabidopsis thaliana (Mouse-ear cress).